Here is a 422-residue protein sequence, read N- to C-terminus: AP-1 complex subunit mu-1-I (422 aa).

The MHD domain maps to Lys167–Arg420.

The protein belongs to the adaptor complexes medium subunit family. In terms of assembly, adaptor protein complex 1 (AP-1) is a heterotetramer composed of two large adaptins (gamma- and beta'-type subunits), a medium adaptin (mu-type subunit AP47) and a small adaptin (sigma-type subunit AP19). Interacts (via N-terminus) with kvs-4. Expressed in the cholinergic motor neuron DA9.

The protein resides in the golgi apparatus. The protein localises to the cytoplasmic vesicle. Its subcellular location is the clathrin-coated vesicle membrane. It localises to the cell projection. It is found in the dendrite. Its function is as follows. Component of the adaptor complexes which link clathrin to receptors in coated vesicles. Clathrin-associated protein complexes are believed to interact with the cytoplasmic tails of membrane proteins, leading to their selection and concentration. Required for many aspects of development and behavior, including negative regulation of vulval differentiation. Required for the dendritic localization of potassium channel kvs-4 in the cholinergic motor neuron DA9. This is AP-1 complex subunit mu-1-I (unc-101) from Caenorhabditis elegans.